The chain runs to 130 residues: Riboflavin kinase (130 aa).

10–15 (GFGEGK) contacts CDP. Mg(2+) is bound by residues Thr39 and Asn41. Thr96 and Glu104 together coordinate FMN. 109-112 (VNLR) provides a ligand contact to CDP.

This sequence belongs to the archaeal riboflavin kinase family. Mg(2+) is required as a cofactor.

It catalyses the reaction riboflavin + CTP = CDP + FMN + H(+). It functions in the pathway cofactor biosynthesis; FMN biosynthesis; FMN from riboflavin (CTP route): step 1/1. In terms of biological role, catalyzes the CTP-dependent phosphorylation of riboflavin (vitamin B2) to form flavin mononucleotide (FMN). In Methanococcus vannielii (strain ATCC 35089 / DSM 1224 / JCM 13029 / OCM 148 / SB), this protein is Riboflavin kinase.